The following is a 506-amino-acid chain: Histidine ammonia-lyase (506 aa).

Positions 143–145 (ASG) form a cross-link, 5-imidazolinone (Ala-Gly). Ser-144 carries the 2,3-didehydroalanine (Ser) modification.

This sequence belongs to the PAL/histidase family. Contains an active site 4-methylidene-imidazol-5-one (MIO), which is formed autocatalytically by cyclization and dehydration of residues Ala-Ser-Gly.

Its subcellular location is the cytoplasm. It carries out the reaction L-histidine = trans-urocanate + NH4(+). The protein operates within amino-acid degradation; L-histidine degradation into L-glutamate; N-formimidoyl-L-glutamate from L-histidine: step 1/3. This chain is Histidine ammonia-lyase, found in Salmonella dublin (strain CT_02021853).